Reading from the N-terminus, the 81-residue chain is Defensin-like protein 311 (81 aa).

A signal peptide spans 1 to 24; it reads MEKISAFFVILFLVSSCLVTMSVG. 3 cysteine pairs are disulfide-bonded: Cys27–Cys50, Cys33–Cys57, and Cys41–Cys59.

The protein belongs to the DEFL family.

It localises to the secreted. The chain is Defensin-like protein 311 from Arabidopsis thaliana (Mouse-ear cress).